A 180-amino-acid chain; its full sequence is Acireductone dioxygenase (180 aa).

Fe(2+) is bound by residues His97, His99, Glu103, and His141. Ni(2+) is bound by residues His97, His99, Glu103, and His141.

This sequence belongs to the acireductone dioxygenase (ARD) family. As to quaternary structure, monomer. Fe(2+) is required as a cofactor. It depends on Ni(2+) as a cofactor.

The catalysed reaction is 1,2-dihydroxy-5-(methylsulfanyl)pent-1-en-3-one + O2 = 3-(methylsulfanyl)propanoate + CO + formate + 2 H(+). It catalyses the reaction 1,2-dihydroxy-5-(methylsulfanyl)pent-1-en-3-one + O2 = 4-methylsulfanyl-2-oxobutanoate + formate + 2 H(+). It participates in amino-acid biosynthesis; L-methionine biosynthesis via salvage pathway; L-methionine from S-methyl-5-thio-alpha-D-ribose 1-phosphate: step 5/6. Functionally, catalyzes 2 different reactions between oxygen and the acireductone 1,2-dihydroxy-3-keto-5-methylthiopentene (DHK-MTPene) depending upon the metal bound in the active site. Fe-containing acireductone dioxygenase (Fe-ARD) produces formate and 2-keto-4-methylthiobutyrate (KMTB), the alpha-ketoacid precursor of methionine in the methionine recycle pathway. Ni-containing acireductone dioxygenase (Ni-ARD) produces methylthiopropionate, carbon monoxide and formate, and does not lie on the methionine recycle pathway. The chain is Acireductone dioxygenase from Yersinia pseudotuberculosis serotype O:1b (strain IP 31758).